A 196-amino-acid polypeptide reads, in one-letter code: Large ribosomal subunit protein uL18 (196 aa).

The protein belongs to the universal ribosomal protein uL18 family. As to quaternary structure, part of the 50S ribosomal subunit. Contacts the 5S and 23S rRNAs.

This is one of the proteins that bind and probably mediate the attachment of the 5S RNA into the large ribosomal subunit, where it forms part of the central protuberance. This chain is Large ribosomal subunit protein uL18, found in Saccharolobus islandicus (strain Y.N.15.51 / Yellowstone #2) (Sulfolobus islandicus).